The primary structure comprises 473 residues: Nuclear distribution protein PAC1 (473 aa).

Residues 9–41 form the LisH domain; sequence QAEELHKSIIAYFLSAKLPKSAAALREEIADSV. Positions 60–87 form a coiled coil; sequence TSVVRLQKKIMDLEARNSALQSELDSAT. Positions 80 to 93 are enriched in polar residues; the sequence is QSELDSATPTSLSR. The disordered stretch occupies residues 80-99; it reads QSELDSATPTSLSRRNQDPV. WD repeat units follow at residues 113-154, 156-196, 200-247, 250-289, 292-352, 354-393, 397-434, and 435-472; these read SHRN…RTIK, HTRA…KNIR, GHDH…CVRT, GHVE…TKST, GHEH…IKTL, GHDN…KCVR, DAHA…ALSG, and VNGI…RVFA.

The protein belongs to the WD repeat LIS1/nudF family. As to quaternary structure, self-associates. Interacts with NDL1 and dynein.

Its subcellular location is the cytoplasm. The protein resides in the cytoskeleton. The protein localises to the spindle pole. Its function is as follows. Positively regulates the activity of the minus-end directed microtubule motor protein dynein. May enhance dynein-mediated microtubule sliding by targeting dynein to the microtubule plus end. Required for nuclear migration during vegetative growth as well as development. Required for retrograde early endosome (EE) transport from the hyphal tip. Required for localization of dynein to the mitotic spindle poles. Recruits additional proteins to the dynein complex at SPBs. This Ajellomyces dermatitidis (strain ER-3 / ATCC MYA-2586) (Blastomyces dermatitidis) protein is Nuclear distribution protein PAC1.